Consider the following 64-residue polypeptide: Temporin-ALd (64 aa).

The N-terminal stretch at 1–22 (MFTMKKSLLLLFFLGTIHLSLC) is a signal peptide. The propeptide occupies 23-46 (EQERNAEEERRDDLGERQAEVEKR). Leucine 62 is subject to Leucine amide.

Expressed by the skin glands.

The protein localises to the secreted. Its function is as follows. Antimicrobial peptide with activity against Gram-positive and Gram-negative bacteria and against fungi. Has been tested against S.aureus (MIC=1.25 ug/mL), B.pumilus (MIC=2.5 ug/mL), B.cereus (MIC=15.0 ug/mL), E.coli (MIC=1.25 ug/mL), B.dysenteriae (MIC=5.0 ug/mL), A.cacoaceticus (MIC=15.0 ug/mL), P.aeruginosa (MIC=5.0 ug/mL) and C.albicans (MIC=1.25 ug/mL). Also shows a weak hemolytic activity. The sequence is that of Temporin-ALd from Amolops loloensis (Lolokou Sucker Frog).